Here is a 436-residue protein sequence, read N- to C-terminus: GTPase Der (436 aa).

2 consecutive EngA-type G domains span residues 4–167 and 176–351; these read PVVA…KDEE and IKLS…ENHK. Residues 10-17, 57-61, 119-122, 182-189, 229-233, and 294-297 each bind GTP; these read GRPNVGKS, DTGGI, NKVD, DTAGM, and NKWD. One can recognise a KH-like domain in the interval 352-436; the sequence is KRVQSSTLNE…PIRIIPRKRN (85 aa).

This sequence belongs to the TRAFAC class TrmE-Era-EngA-EngB-Septin-like GTPase superfamily. EngA (Der) GTPase family. As to quaternary structure, associates with the 50S ribosomal subunit.

Functionally, GTPase that plays an essential role in the late steps of ribosome biogenesis. This Staphylococcus carnosus (strain TM300) protein is GTPase Der.